Reading from the N-terminus, the 273-residue chain is 2,3,4,5-tetrahydropyridine-2,6-dicarboxylate N-succinyltransferase (273 aa).

2 residues coordinate substrate: R104 and D141.

It belongs to the transferase hexapeptide repeat family. Homotrimer.

It is found in the cytoplasm. It catalyses the reaction (S)-2,3,4,5-tetrahydrodipicolinate + succinyl-CoA + H2O = (S)-2-succinylamino-6-oxoheptanedioate + CoA. Its pathway is amino-acid biosynthesis; L-lysine biosynthesis via DAP pathway; LL-2,6-diaminopimelate from (S)-tetrahydrodipicolinate (succinylase route): step 1/3. The sequence is that of 2,3,4,5-tetrahydropyridine-2,6-dicarboxylate N-succinyltransferase from Blochmanniella pennsylvanica (strain BPEN).